The sequence spans 301 residues: Radial spoke head 1 homolog (301 aa).

Positions 1–20 are enriched in acidic residues; the sequence is MSDLGSEELEEEGENDLGEY. The disordered stretch occupies residues 1-41; that stretch reads MSDLGSEELEEEGENDLGEYEGERNEVGERHGHGKARLPNG. MORN repeat units lie at residues 20–43, 44–66, 67–89, 90–112, 113–135, and 159–181; these read YEGE…NGDT, YEGS…NGAR, YTGD…DGSR, YEGE…NNDT, YTGE…ETGS, and YQGK…IGCE. Residues 21 to 31 show a composition bias toward basic and acidic residues; that stretch reads EGERNEVGERH. The tract at residues 225-301 is disordered; the sequence is LSEEQPPPEG…FDEEPSDLQD (77 aa). A compositionally biased stretch (acidic residues) spans 249-261; sequence PSEDIQAEGFEGE. Over residues 262-278 the composition is skewed to basic and acidic residues; that stretch reads LEPRGADEDVDTFRQES. Polar residues predominate over residues 279–290; sequence QENSYDIDQGNL. Residues 292–301 show a composition bias toward acidic residues; sequence FDEEPSDLQD.

In terms of assembly, component of the axonemal radial spoke 1 (RS1) and 2 (RS2) complexes, at least composed of spoke head proteins RSPH1, RSPH3, RSPH9 and the cilia-specific component RSPH4A or sperm-specific component RSPH6A, spoke stalk proteins RSPH14, DNAJB13, DYDC1, ROPN1L and NME5, and the RS1 complex-specific anchor protein IQUB. Interacts with RSPH3B. Interacts with RSPH4A. Interacts with RSPH6A. As to expression, expressed in the trachea, ependymal cells, oviduct and ependymal cells (at protein level). Germ cell specific. Specifically expressed in testis, and to a lower extent in ovary. Not expressed in somatic tissues.

Its subcellular location is the cytoplasm. The protein resides in the chromosome. It is found in the cytoskeleton. The protein localises to the cilium axoneme. It localises to the flagellum axoneme. Functionally, functions as part of axonemal radial spoke complexes that play an important part in the motility of sperm and cilia. The protein is Radial spoke head 1 homolog (Rsph1) of Mus musculus (Mouse).